Here is a 67-residue protein sequence, read N- to C-terminus: UPF0337 protein Atu4724 (67 aa).

This sequence belongs to the UPF0337 (CsbD) family.

This chain is UPF0337 protein Atu4724, found in Agrobacterium fabrum (strain C58 / ATCC 33970) (Agrobacterium tumefaciens (strain C58)).